The primary structure comprises 482 residues: Chromosomal replication initiator protein DnaA (482 aa).

The interval methionine 1–glutamate 71 is domain I, interacts with DnaA modulators. Positions glutamate 71–serine 139 are domain II. The domain III, AAA+ region stretch occupies residues proline 140–arginine 362. 4 residues coordinate ATP: glycine 186, glycine 188, lysine 189, and threonine 190. Residues serine 363–glutamate 482 are domain IV, binds dsDNA.

It belongs to the DnaA family. Oligomerizes as a right-handed, spiral filament on DNA at oriC.

The protein localises to the cytoplasm. Its function is as follows. Plays an essential role in the initiation and regulation of chromosomal replication. ATP-DnaA binds to the origin of replication (oriC) to initiate formation of the DNA replication initiation complex once per cell cycle. Binds the DnaA box (a 9 base pair repeat at the origin) and separates the double-stranded (ds)DNA. Forms a right-handed helical filament on oriC DNA; dsDNA binds to the exterior of the filament while single-stranded (ss)DNA is stabiized in the filament's interior. The ATP-DnaA-oriC complex binds and stabilizes one strand of the AT-rich DNA unwinding element (DUE), permitting loading of DNA polymerase. After initiation quickly degrades to an ADP-DnaA complex that is not apt for DNA replication. Binds acidic phospholipids. This is Chromosomal replication initiator protein DnaA from Rhizobium johnstonii (strain DSM 114642 / LMG 32736 / 3841) (Rhizobium leguminosarum bv. viciae).